The chain runs to 539 residues: Chaperonin GroEL (539 aa).

Residues 29–32 (TLGP), 86–90 (DGTTT), G413, 479–481 (DAL), and D495 each bind ATP.

The protein belongs to the chaperonin (HSP60) family. As to quaternary structure, forms a cylinder of 14 subunits composed of two heptameric rings stacked back-to-back. Interacts with the co-chaperonin GroES.

It is found in the cytoplasm. It catalyses the reaction ATP + H2O + a folded polypeptide = ADP + phosphate + an unfolded polypeptide.. Its function is as follows. Together with its co-chaperonin GroES, plays an essential role in assisting protein folding. The GroEL-GroES system forms a nano-cage that allows encapsulation of the non-native substrate proteins and provides a physical environment optimized to promote and accelerate protein folding. This Thermosipho africanus (strain TCF52B) protein is Chaperonin GroEL.